A 910-amino-acid polypeptide reads, in one-letter code: Protein CHROMATIN REMODELING 25 (910 aa).

Composition is skewed to acidic residues over residues 1–18 and 26–39; these read MEEE…DDSS and QDSE…ECED. Residues 1–39 form a disordered region; sequence MEEEDEEILSSSDCDDSSDSYKDDSQDSEGENDNPECED. The region spanning 198–371 is the Helicase ATP-binding domain; the sequence is LHGSANINGC…FAMVNFTNPG (174 aa). 211 to 218 provides a ligand contact to ATP; the sequence is DDMGLGKT. The short motif at 322-325 is the DEAH box element; the sequence is DEAH. Positions 396–417 form a coiled coil; the sequence is TEEEKNLAADRSAELSSKVNQF. Residues 538 to 696 enclose the Helicase C-terminal domain; sequence VLSRLLANLR…QTDNSTRQGN (159 aa). The tract at residues 828–861 is disordered; it reads VSPKTVESEEHNRNQPVNKRAFNKPQQRPREPLQ.

The protein belongs to the SNF2/RAD54 helicase family. As to quaternary structure, interacts with RAD51. Binds to the geminivirus mungbean yellow mosaic virus (MYMV) and to the tomato leaf curl virus (ToLCV) replication-associated proteins. Expressed ubiquitously, with the highest levels of expression in flower buds. Present in flower buds (at protein level).

The protein resides in the nucleus. Functionally, dissociates RAD51 from nucleoprotein filaments formed on dsDNA. Could be involved in the turnover of RAD51 protein-dsDNA filaments. Addition of RAD54 overcomes inhibition of DNA strand exchange by RAD51 bound to substrate dsDNA. Species preference in the RAD51 dissociation and DNA strand exchange assays underlines the importance of specific RAD54-RAD51 interactions. RAD51 is unable to release dsDNA upon ATP hydrolysis, leaving it stuck on the heteroduplex DNA product after DNA strand exchange. Involved in DNA repair and mitotic recombination. Functions in the homologous recombinational DNA repair (RAD52) pathway. Required for synthesis-dependent strand annealing (SDSA) during double-strand break repair. Facilitates geminiviral replication (e.g. geminivirus mungbean yellow mosaic virus (MYMV) and tomato leaf curl virus (ToLCV)). This is Protein CHROMATIN REMODELING 25 (CHR25) from Arabidopsis thaliana (Mouse-ear cress).